The sequence spans 143 residues: Transcriptional regulator SlyA (143 aa).

The HTH marR-type domain maps to 2 to 135 (ESTLGSDLAR…LANLIERLEQ (134 aa)). The H-T-H motif DNA-binding region spans 49–72 (QIQLAKAIGIEQPSLVRTLDQLED).

This sequence belongs to the SlyA family. As to quaternary structure, homodimer.

Transcription regulator that can specifically activate or repress expression of target genes. The polypeptide is Transcriptional regulator SlyA (Edwardsiella ictaluri (strain 93-146)).